We begin with the raw amino-acid sequence, 492 residues long: Aspartate aminotransferase (492 aa).

The transit peptide at 1–66 directs the protein to the chloroplast; that stretch reads MMSASFKCPV…KGSCCLFNIR (66 aa). Residues Gly-119, Trp-206, and Asn-256 each coordinate L-aspartate. Lys-319 is modified (N6-(pyridoxal phosphate)lysine). Position 458 (Arg-458) interacts with L-aspartate.

It belongs to the class-I pyridoxal-phosphate-dependent aminotransferase family. Homodimer. The cofactor is pyridoxal 5'-phosphate.

The protein resides in the plastid. Its subcellular location is the chloroplast. It catalyses the reaction L-aspartate + 2-oxoglutarate = oxaloacetate + L-glutamate. Its function is as follows. Prokaryotic-type aspartate aminotransferase. Specific for aspartate and no activity with glutamine, asparagine, alanine, histidine, leucine, methionine, lysine, arginine, tryptophan, tyrosine, phenylalanine or kynurenine. This is Aspartate aminotransferase (AAT) from Pinus pinaster (Maritime pine).